Reading from the N-terminus, the 359-residue chain is DNA integrity scanning protein DisA (359 aa).

Residues 7 to 146 (DDIFRATLAA…GRRYVLDGSA (140 aa)) form the DAC domain. ATP-binding positions include Gly74, Leu92, and 105 to 109 (TRHRT).

It belongs to the DisA family. Homooctamer. Mg(2+) serves as cofactor.

It catalyses the reaction 2 ATP = 3',3'-c-di-AMP + 2 diphosphate. Functionally, participates in a DNA-damage check-point that is active prior to asymmetric division when DNA is damaged. DisA forms globular foci that rapidly scan along the chromosomes during sporulation, searching for lesions. When a lesion is present, DisA pauses at the lesion site. This triggers a cellular response that culminates in a temporary block in sporulation initiation. In terms of biological role, also has diadenylate cyclase activity, catalyzing the condensation of 2 ATP molecules into cyclic di-AMP (c-di-AMP). c-di-AMP acts as a signaling molecule that couples DNA integrity with progression of sporulation. The rise in c-di-AMP level generated by DisA while scanning the chromosome, operates as a positive signal that advances sporulation; upon encountering a lesion, the DisA focus arrests at the damaged site and halts c-di-AMP synthesis. The polypeptide is DNA integrity scanning protein DisA (Frankia alni (strain DSM 45986 / CECT 9034 / ACN14a)).